Consider the following 782-residue polypeptide: Semaphorin-3G (782 aa).

The N-terminal stretch at 1-22 (MAPSAWAICWLLGGLLLHGGSS) is a signal peptide. The 488-residue stretch at 32-519 (RLRLSYRDLL…SRLGVAQLRL (488 aa)) folds into the Sema domain. Residue Asn44 is glycosylated (N-linked (GlcNAc...) asparagine). A disulfide bridge connects residues Cys105 and Cys116. Residue Asn127 is glycosylated (N-linked (GlcNAc...) asparagine). Cystine bridges form between Cys134–Cys143, Cys270–Cys382, Cys294–Cys342, Cys522–Cys540, and Cys603–Cys655. The Ig-like C2-type domain maps to 569-671 (PALQCLGQSQ…FSQTVVRLAL (103 aa)).

This sequence belongs to the semaphorin family.

It localises to the secreted. Functionally, has chemorepulsive activities for sympathetic axons. Ligand of NRP2. This chain is Semaphorin-3G (SEMA3G), found in Homo sapiens (Human).